A 315-amino-acid polypeptide reads, in one-letter code: Homeobox-leucine zipper protein HAT3 (315 aa).

Residues 140 to 163 form a disordered region; it reads SCSLGGGSDDEDGSGNGDDSSRKK. The homeobox DNA-binding region spans 159–218; it reads SSRKKLRLSKEQALVLEETFKEHSTLNPKQKMALAKQLNLRTRQVEVWFQNRRARTKLKQ. The segment at 226 to 247 is leucine-zipper; sequence LKRCCENLTDENRRLQKEVSEL. Over residues 280-305 the composition is skewed to low complexity; the sequence is SSSSVAPPVMNSSSPMGPMSPWAAMP. Positions 280 to 315 are disordered; the sequence is SSSSVAPPVMNSSSPMGPMSPWAAMPLRQRPAAGSH.

Belongs to the HD-ZIP homeobox family. Class II subfamily.

Its subcellular location is the nucleus. Its function is as follows. Probable transcription factor. This Arabidopsis thaliana (Mouse-ear cress) protein is Homeobox-leucine zipper protein HAT3 (HAT3).